Reading from the N-terminus, the 228-residue chain is Uracil-DNA glycosylase (228 aa).

Catalysis depends on D64, which acts as the Proton acceptor.

This sequence belongs to the uracil-DNA glycosylase (UDG) superfamily. UNG family.

Its subcellular location is the cytoplasm. The catalysed reaction is Hydrolyzes single-stranded DNA or mismatched double-stranded DNA and polynucleotides, releasing free uracil.. Functionally, excises uracil residues from the DNA which can arise as a result of misincorporation of dUMP residues by DNA polymerase or due to deamination of cytosine. The polypeptide is Uracil-DNA glycosylase (Pectobacterium carotovorum subsp. carotovorum (strain PC1)).